Here is an 87-residue protein sequence, read N- to C-terminus: Translation initiation factor IF-1 2 (87 aa).

Residues 1-72 (MAKEEVIEME…TKGRINFRHK (72 aa)) form the S1-like domain.

Belongs to the IF-1 family. Component of the 30S ribosomal translation pre-initiation complex which assembles on the 30S ribosome in the order IF-2 and IF-3, IF-1 and N-formylmethionyl-tRNA(fMet); mRNA recruitment can occur at any time during PIC assembly.

The protein localises to the cytoplasm. Its function is as follows. One of the essential components for the initiation of protein synthesis. Stabilizes the binding of IF-2 and IF-3 on the 30S subunit to which N-formylmethionyl-tRNA(fMet) subsequently binds. Helps modulate mRNA selection, yielding the 30S pre-initiation complex (PIC). Upon addition of the 50S ribosomal subunit IF-1, IF-2 and IF-3 are released leaving the mature 70S translation initiation complex. In Thiobacillus denitrificans (strain ATCC 25259 / T1), this protein is Translation initiation factor IF-1 2.